A 43-amino-acid polypeptide reads, in one-letter code: Cytochrome b559 subunit beta (43 aa).

Residues 18–34 traverse the membrane as a helical segment; it reads WLAIHGLAIPTVFFFGA. His22 serves as a coordination point for heme.

The protein belongs to the PsbE/PsbF family. Heterodimer of an alpha subunit and a beta subunit. PSII is composed of 1 copy each of membrane proteins PsbA, PsbB, PsbC, PsbD, PsbE, PsbF, PsbH, PsbI, PsbJ, PsbK, PsbL, PsbM, PsbT, PsbY, PsbZ, Psb30/Ycf12, at least 3 peripheral proteins of the oxygen-evolving complex and a large number of cofactors. It forms dimeric complexes. Heme b serves as cofactor.

Its subcellular location is the plastid. The protein resides in the chloroplast thylakoid membrane. Its function is as follows. This b-type cytochrome is tightly associated with the reaction center of photosystem II (PSII). PSII is a light-driven water:plastoquinone oxidoreductase that uses light energy to abstract electrons from H(2)O, generating O(2) and a proton gradient subsequently used for ATP formation. It consists of a core antenna complex that captures photons, and an electron transfer chain that converts photonic excitation into a charge separation. This chain is Cytochrome b559 subunit beta, found in Cyanidium caldarium (Red alga).